A 426-amino-acid chain; its full sequence is Glutamate-1-semialdehyde 2,1-aminomutase (426 aa).

Lys263 is modified (N6-(pyridoxal phosphate)lysine).

Belongs to the class-III pyridoxal-phosphate-dependent aminotransferase family. HemL subfamily. In terms of assembly, homodimer. Pyridoxal 5'-phosphate serves as cofactor.

The protein resides in the cytoplasm. It catalyses the reaction (S)-4-amino-5-oxopentanoate = 5-aminolevulinate. Its pathway is porphyrin-containing compound metabolism; protoporphyrin-IX biosynthesis; 5-aminolevulinate from L-glutamyl-tRNA(Glu): step 2/2. The protein is Glutamate-1-semialdehyde 2,1-aminomutase of Caldicellulosiruptor bescii (strain ATCC BAA-1888 / DSM 6725 / KCTC 15123 / Z-1320) (Anaerocellum thermophilum).